Here is a 734-residue protein sequence, read N- to C-terminus: Photosystem I P700 chlorophyll a apoprotein A2 (734 aa).

8 helical membrane passes run 46–69 (IFAS…FHVA), 135–158 (LYTG…LHLQ), 175–199 (LNHH…HVAI), 273–291 (IAHH…GHMY), 330–353 (IHFQ…QHMY), 369–395 (AALY…IFFI), 417–439 (AIIS…LYVH), and 517–535 (FLVH…LILV). Positions 559 and 568 each coordinate [4Fe-4S] cluster. The next 2 helical transmembrane spans lie at 575–596 (AFYL…YWHW) and 643–665 (LSVW…MFLI). Residues His-654, Met-662, and Tyr-670 each coordinate chlorophyll a. Trp-671 contributes to the phylloquinone binding site. The chain crosses the membrane as a helical span at residues 707-727 (LVGLAHFSVGYIFTYAAFLIA).

Belongs to the PsaA/PsaB family. The PsaA/B heterodimer binds the P700 chlorophyll special pair and subsequent electron acceptors. PSI consists of a core antenna complex that captures photons, and an electron transfer chain that converts photonic excitation into a charge separation. The eukaryotic PSI reaction center is composed of at least 11 subunits. P700 is a chlorophyll a/chlorophyll a' dimer, A0 is one or more chlorophyll a, A1 is one or both phylloquinones and FX is a shared 4Fe-4S iron-sulfur center. serves as cofactor.

The protein resides in the plastid. The protein localises to the chloroplast thylakoid membrane. It carries out the reaction reduced [plastocyanin] + hnu + oxidized [2Fe-2S]-[ferredoxin] = oxidized [plastocyanin] + reduced [2Fe-2S]-[ferredoxin]. PsaA and PsaB bind P700, the primary electron donor of photosystem I (PSI), as well as the electron acceptors A0, A1 and FX. PSI is a plastocyanin-ferredoxin oxidoreductase, converting photonic excitation into a charge separation, which transfers an electron from the donor P700 chlorophyll pair to the spectroscopically characterized acceptors A0, A1, FX, FA and FB in turn. Oxidized P700 is reduced on the lumenal side of the thylakoid membrane by plastocyanin. This Saccharum hybrid (Sugarcane) protein is Photosystem I P700 chlorophyll a apoprotein A2.